Reading from the N-terminus, the 148-residue chain is Arginine repressor (148 aa).

It belongs to the ArgR family.

Its subcellular location is the cytoplasm. The protein operates within amino-acid biosynthesis; L-arginine biosynthesis [regulation]. Regulates arginine biosynthesis genes. In Acidobacterium capsulatum (strain ATCC 51196 / DSM 11244 / BCRC 80197 / JCM 7670 / NBRC 15755 / NCIMB 13165 / 161), this protein is Arginine repressor.